The primary structure comprises 128 residues: Large ribosomal subunit protein bL19 (128 aa).

It belongs to the bacterial ribosomal protein bL19 family.

Its function is as follows. This protein is located at the 30S-50S ribosomal subunit interface and may play a role in the structure and function of the aminoacyl-tRNA binding site. The sequence is that of Large ribosomal subunit protein bL19 from Janthinobacterium sp. (strain Marseille) (Minibacterium massiliensis).